The following is a 264-amino-acid chain: U1 snRNP-associated protein usp106 (264 aa).

Positions 83–126 (DYLEDLERHVDDCNKRIDIAEARREKTKEEEERIDELMRDIIHT) form a coiled coil. The span at 233 to 258 (EDREKSRDKKDGEKQRDNLASFEDKI) shows a compositional bias: basic and acidic residues. A disordered region spans residues 233-264 (EDREKSRDKKDGEKQRDNLASFEDKISTSFVA).

The protein belongs to the Luc7 family. Component of the U1 snRNP particle, a subcomplex of the spliceosome.

Its subcellular location is the cytoplasm. The protein localises to the nucleus. In terms of biological role, component of the U1 snRNP particle, which recognizes and binds the 5'-splice site of pre-mRNA. Together with other non-snRNP factors, U1 snRNP forms the spliceosomal commitment complex, that targets pre-mRNA to the splicing pathway. The polypeptide is U1 snRNP-associated protein usp106 (usp106) (Schizosaccharomyces pombe (strain 972 / ATCC 24843) (Fission yeast)).